We begin with the raw amino-acid sequence, 192 residues long: Putative inactive ribonuclease 11 (192 aa).

The N-terminal stretch at 1–15 (MAVFLLLLALGLLLA) is a signal peptide. The segment at 21 to 54 (RMKGTTEQFSQEEMQPAAKQTLEESANSTLSDKN) is disordered. Polar residues predominate over residues 43–54 (EESANSTLSDKN). N-linked (GlcNAc...) asparagine glycosylation is found at N47 and N104.

It belongs to the pancreatic ribonuclease family.

The protein localises to the secreted. This is Putative inactive ribonuclease 11 (Rnase11) from Mus musculus (Mouse).